A 152-amino-acid chain; its full sequence is Deoxyuridine 5'-triphosphate nucleotidohydrolase (152 aa).

Substrate is bound by residues 71–73 (RSG), Asn84, 88–90 (LID), and Met98.

It belongs to the dUTPase family. Mg(2+) serves as cofactor.

The catalysed reaction is dUTP + H2O = dUMP + diphosphate + H(+). It participates in pyrimidine metabolism; dUMP biosynthesis; dUMP from dCTP (dUTP route): step 2/2. Its function is as follows. This enzyme is involved in nucleotide metabolism: it produces dUMP, the immediate precursor of thymidine nucleotides and it decreases the intracellular concentration of dUTP so that uracil cannot be incorporated into DNA. The sequence is that of Deoxyuridine 5'-triphosphate nucleotidohydrolase from Shewanella putrefaciens (strain CN-32 / ATCC BAA-453).